A 184-amino-acid chain; its full sequence is MTNTVTIELKIGYKYAAEVVKAVLGVILFHRQFSTVPARTIDVLDITVPTLVGAELNEQLATKAAEFIDTIRNEAGANGQMILLLYERSPKKSWFGKGNTIPWEQWILHTTILEEGDSYQESSLSLEAAVEQIVQAVNLRSLSYLPPVAMDSGNYPYEIVTPTSTEGWGSLLKRMIIENVSGGD.

Belongs to the ATG101 family. Component of the atg1 kinase complex composed of at least atg1, atg13, atg17 and atg101. Interacts directly with atg13.

It is found in the cytoplasm. The protein localises to the nucleus. Its subcellular location is the preautophagosomal structure membrane. Its function is as follows. Autophagy factor required for autophagosome formation. Component of the atg1 kinase complex in which it stabilizes atg13. Is also responsible for recruiting downstream factors to the autophagosome-formation site. Has a role in meiosis and sporulation. The protein is Autophagy-related protein 101 of Schizosaccharomyces pombe (strain 972 / ATCC 24843) (Fission yeast).